The sequence spans 431 residues: tRNA(Ile)-lysidine synthase (431 aa).

19–24 serves as a coordination point for ATP; it reads STGIDS.

Belongs to the tRNA(Ile)-lysidine synthase family.

It is found in the cytoplasm. It catalyses the reaction cytidine(34) in tRNA(Ile2) + L-lysine + ATP = lysidine(34) in tRNA(Ile2) + AMP + diphosphate + H(+). In terms of biological role, ligates lysine onto the cytidine present at position 34 of the AUA codon-specific tRNA(Ile) that contains the anticodon CAU, in an ATP-dependent manner. Cytidine is converted to lysidine, thus changing the amino acid specificity of the tRNA from methionine to isoleucine. The chain is tRNA(Ile)-lysidine synthase from Staphylococcus aureus (strain MRSA252).